The following is a 388-amino-acid chain: 3-dehydroquinate synthase (388 aa).

It belongs to the archaeal-type DHQ synthase family.

It catalyses the reaction 2-amino-2,3,7-trideoxy-D-lyxo-hept-6-ulosonate + NAD(+) + H2O = 3-dehydroquinate + NH4(+) + NADH + H(+). Functionally, catalyzes the oxidative deamination and cyclization of 2-amino-3,7-dideoxy-D-threo-hept-6-ulosonic acid (ADH) to yield 3-dehydroquinate (DHQ), which is fed into the canonical shikimic pathway of aromatic amino acid biosynthesis. This chain is 3-dehydroquinate synthase, found in Haloarcula marismortui (strain ATCC 43049 / DSM 3752 / JCM 8966 / VKM B-1809) (Halobacterium marismortui).